The sequence spans 69 residues: Large ribosomal subunit protein uL29 (69 aa).

It belongs to the universal ribosomal protein uL29 family.

This Natronomonas pharaonis (strain ATCC 35678 / DSM 2160 / CIP 103997 / JCM 8858 / NBRC 14720 / NCIMB 2260 / Gabara) (Halobacterium pharaonis) protein is Large ribosomal subunit protein uL29.